We begin with the raw amino-acid sequence, 220 residues long: Urease accessory protein UreG (220 aa).

18-25 (GPVGSGKT) contacts GTP.

The protein belongs to the SIMIBI class G3E GTPase family. UreG subfamily. Homodimer. UreD, UreF and UreG form a complex that acts as a GTP-hydrolysis-dependent molecular chaperone, activating the urease apoprotein by helping to assemble the nickel containing metallocenter of UreC. The UreE protein probably delivers the nickel.

It localises to the cytoplasm. In terms of biological role, facilitates the functional incorporation of the urease nickel metallocenter. This process requires GTP hydrolysis, probably effectuated by UreG. This is Urease accessory protein UreG from Yersinia pestis.